Here is a 598-residue protein sequence, read N- to C-terminus: Elongation factor 4 (598 aa).

Residues 4–186 (KHIRNFSIIA…VIVRQIPPPE (183 aa)) enclose the tr-type G domain. Residues 16 to 21 (DHGKST) and 133 to 136 (NKID) each bind GTP.

The protein belongs to the TRAFAC class translation factor GTPase superfamily. Classic translation factor GTPase family. LepA subfamily.

It is found in the cell inner membrane. It catalyses the reaction GTP + H2O = GDP + phosphate + H(+). Functionally, required for accurate and efficient protein synthesis under certain stress conditions. May act as a fidelity factor of the translation reaction, by catalyzing a one-codon backward translocation of tRNAs on improperly translocated ribosomes. Back-translocation proceeds from a post-translocation (POST) complex to a pre-translocation (PRE) complex, thus giving elongation factor G a second chance to translocate the tRNAs correctly. Binds to ribosomes in a GTP-dependent manner. The polypeptide is Elongation factor 4 (Pseudoalteromonas atlantica (strain T6c / ATCC BAA-1087)).